The primary structure comprises 439 residues: Gap junction gamma-2 protein (439 aa).

Residues 1 to 25 (MTNMSWSFLTRLLEEIHNHSTFVGK) lie on the Cytoplasmic side of the membrane. The chain crosses the membrane as a helical span at residues 26 to 46 (VWLTVLVVFRIVLTAVGGEAI). Residues 47-78 (YSDEQAKFTCNTRQPGCDNVCYDAFAPLSHVR) lie on the Extracellular side of the membrane. The helical transmembrane segment at 79 to 99 (FWVFQIVVISTPSVMYLGYAV) threads the bilayer. Over 100–216 (HRLARASEQE…EGLMRVYVAQ (117 aa)) the chain is Cytoplasmic. The segment at 108–178 (QERRRALRRR…AEEAGAEEAC (71 aa)) is disordered. The segment covering 112–125 (RALRRRPGPRRAPR) has biased composition (basic residues). Residues 140 to 174 (DLGEEEPMLGLGEEEEEEETGAAEGAGEEAEEAGA) are compositionally biased toward acidic residues. The helical transmembrane segment at 217 to 237 (LVARAAFEVAFLVGQYLLYGF) threads the bilayer. The Extracellular segment spans residues 238-265 (EVRPFFPCSRQPCPHVVDCFVSRPTEKT). The helical transmembrane segment at 266–286 (VFLLVMYVVSCLCLLLNLCEM) threads the bilayer. At 287–439 (AHLGLGSAQD…SRDGKTTVWI (153 aa)) the chain is on the cytoplasmic side. Positions 364-439 (AGDRDRDSSP…SRDGKTTVWI (76 aa)) are disordered. Ser-371 carries the phosphoserine modification. A compositionally biased stretch (low complexity) spans 378–393 (PAASRGPPRAGAPASR).

It belongs to the connexin family. Gamma-type subfamily. A connexon is composed of a hexamer of connexins. Interacts with TJP1. Expressed in central nervous system, in sciatic nerve and sural nerve. Also detected in skeletal muscles.

The protein resides in the cell membrane. The protein localises to the cell junction. Its subcellular location is the gap junction. Its function is as follows. One gap junction consists of a cluster of closely packed pairs of transmembrane channels, the connexons, through which materials of low MW diffuse from one cell to a neighboring cell. May play a role in myelination in central and peripheral nervous systems. In Homo sapiens (Human), this protein is Gap junction gamma-2 protein (GJC2).